The chain runs to 681 residues: DNA ligase (681 aa).

Residues Asp35–Asp39, Ser84–Leu85, and Glu115 each bind NAD(+). Lys117 functions as the N6-AMP-lysine intermediate in the catalytic mechanism. NAD(+) is bound by residues Arg138, Glu175, Lys293, and Lys317. The Zn(2+) site is built by Cys411, Cys414, Cys429, and Cys435. Positions Arg598–Glu681 constitute a BRCT domain.

The protein belongs to the NAD-dependent DNA ligase family. LigA subfamily. It depends on Mg(2+) as a cofactor. Mn(2+) is required as a cofactor.

It carries out the reaction NAD(+) + (deoxyribonucleotide)n-3'-hydroxyl + 5'-phospho-(deoxyribonucleotide)m = (deoxyribonucleotide)n+m + AMP + beta-nicotinamide D-nucleotide.. DNA ligase that catalyzes the formation of phosphodiester linkages between 5'-phosphoryl and 3'-hydroxyl groups in double-stranded DNA using NAD as a coenzyme and as the energy source for the reaction. It is essential for DNA replication and repair of damaged DNA. The polypeptide is DNA ligase (Nitrosomonas europaea (strain ATCC 19718 / CIP 103999 / KCTC 2705 / NBRC 14298)).